A 102-amino-acid chain; its full sequence is MVRCRVRSPSERSHEVYRQQLHGQEQGHHGQEEQGLSPEHVEVYERTHGHSHYRRRHCSRRRLRRIHRQQHRSCRRRKRRSCRHRRRHRKGCRTRRRTCRRH.

The interval 1 to 102 (MVRCRVRSPS…RTRRRTCRRH (102 aa)) is disordered. 3 positions are modified to phosphoserine: serine 8, serine 10, and serine 37. The span at 8-17 (SPSERSHEVY) shows a compositional bias: basic and acidic residues. The segment covering 39-48 (EHVEVYERTH) has biased composition (basic and acidic residues). Basic residues predominate over residues 49–102 (GHSHYRRRHCSRRRLRRIHRQQHRSCRRRKRRSCRHRRRHRKGCRTRRRTCRRH).

This sequence belongs to the protamine P2 family. In terms of assembly, interacts with TDRP. Proteolytic processing into mature chains is required for histone eviction during spermatogenesis. Transition proteins (TNP1 and TNP2) are required for processing. As to expression, testis.

Its subcellular location is the nucleus. The protein localises to the chromosome. In terms of biological role, protamines substitute for histones in the chromatin of sperm during the haploid phase of spermatogenesis. They compact sperm DNA into a highly condensed, stable and inactive complex. The chain is Protamine-2 (PRM2) from Gorilla gorilla gorilla (Western lowland gorilla).